A 137-amino-acid chain; its full sequence is Large ribosomal subunit protein uL16 (137 aa).

This sequence belongs to the universal ribosomal protein uL16 family. Part of the 50S ribosomal subunit.

Its function is as follows. Binds 23S rRNA and is also seen to make contacts with the A and possibly P site tRNAs. The chain is Large ribosomal subunit protein uL16 from Nitratidesulfovibrio vulgaris (strain DSM 19637 / Miyazaki F) (Desulfovibrio vulgaris).